The primary structure comprises 496 residues: UDP-N-acetylmuramoyl-L-alanyl-D-glutamate--2,6-diaminopimelate ligase (496 aa).

L29 and S31 together coordinate UDP-N-acetyl-alpha-D-muramoyl-L-alanyl-D-glutamate. Position 118–124 (118–124) interacts with ATP; sequence GTNGKTT. Residues N159, 160 to 161, S187, Q193, and R195 each bind UDP-N-acetyl-alpha-D-muramoyl-L-alanyl-D-glutamate; that span reads TT. K227 carries the post-translational modification N6-carboxylysine. Residues R392, 416 to 419, G467, and E471 contribute to the meso-2,6-diaminopimelate site; that span reads DNPR. The Meso-diaminopimelate recognition motif motif lies at 416-419; the sequence is DNPR.

Belongs to the MurCDEF family. MurE subfamily. Mg(2+) is required as a cofactor. Post-translationally, carboxylation is probably crucial for Mg(2+) binding and, consequently, for the gamma-phosphate positioning of ATP.

Its subcellular location is the cytoplasm. It catalyses the reaction UDP-N-acetyl-alpha-D-muramoyl-L-alanyl-D-glutamate + meso-2,6-diaminopimelate + ATP = UDP-N-acetyl-alpha-D-muramoyl-L-alanyl-gamma-D-glutamyl-meso-2,6-diaminopimelate + ADP + phosphate + H(+). Its pathway is cell wall biogenesis; peptidoglycan biosynthesis. In terms of biological role, catalyzes the addition of meso-diaminopimelic acid to the nucleotide precursor UDP-N-acetylmuramoyl-L-alanyl-D-glutamate (UMAG) in the biosynthesis of bacterial cell-wall peptidoglycan. This is UDP-N-acetylmuramoyl-L-alanyl-D-glutamate--2,6-diaminopimelate ligase from Wigglesworthia glossinidia brevipalpis.